The chain runs to 326 residues: AETTAPSVYPLAPGTALKSNSMVTLGCLVKGYFPEPVTVTWNSGALSSGVHTFPAVLQSGLYTLTSSVTVPSSTWPSQTVTCNVAHPASSTKVDKKIVPRNCGGDCKPCICTGSEVSSVFIFPPKPKDVLTITLTPKVTCVVVDISQDDPEVHFSWFVDDVEVHTAQTRPPEEQFNSTFRSVSELPILHQDWLNGRTFRCKVTSAAFPSPIEKTISKPEGRTQVPHVYTMSPTKEEMTQNEVSITCMVKGFYPPDIYVEWQMNGQPQENYKNTPPTMDTDGSYFLYSKLNVKKEKWQQGNTFTCSVLHEGLHNHHTEKSLSHSPGK.

The interval 1–97 is CH1; it reads AETTAPSVYP…ASSTKVDKKI (97 aa). Cysteine 27 and cysteine 82 are oxidised to a cystine. Residues 98 to 112 form a hinge region; the sequence is VPRNCGGDCKPCICT. The interval 113 to 219 is CH2; it reads GSEVSSVFIF…PIEKTISKPE (107 aa). Intrachain disulfides connect cysteine 140-cysteine 200 and cysteine 246-cysteine 304. N-linked (GlcNAc...) asparagine glycosylation occurs at asparagine 176. The CH3 stretch occupies residues 220-326; sequence GRTQVPHVYT…EKSLSHSPGK (107 aa).

The sequence is that of Ig gamma-1 chain C region from Rattus norvegicus (Rat).